Consider the following 105-residue polypeptide: Large ribosomal subunit protein eL33 (105 aa).

It belongs to the eukaryotic ribosomal protein eL33 family.

Functionally, the protein was found to bind to both initiator and elongator tRNAs and consequently was assigned to the P site or P and A site. The protein is Large ribosomal subunit protein eL33 (rpl35a) of Dictyostelium discoideum (Social amoeba).